Consider the following 233-residue polypeptide: Large ribosomal subunit protein uL1 (233 aa).

This sequence belongs to the universal ribosomal protein uL1 family. In terms of assembly, part of the 50S ribosomal subunit.

Its function is as follows. Binds directly to 23S rRNA. The L1 stalk is quite mobile in the ribosome, and is involved in E site tRNA release. In terms of biological role, protein L1 is also a translational repressor protein, it controls the translation of the L11 operon by binding to its mRNA. In Geotalea daltonii (strain DSM 22248 / JCM 15807 / FRC-32) (Geobacter daltonii), this protein is Large ribosomal subunit protein uL1.